An 841-amino-acid polypeptide reads, in one-letter code: 27S pre-rRNA (guanosine(2922)-2'-O)-methyltransferase (841 aa).

Residues Gly58, Trp60, Asp78, Asp94, and Asp119 each contribute to the S-adenosyl-L-methionine site. Residue Lys159 is the Proton acceptor of the active site. Positions 360 to 389 (QEKQRLNVKRERRRKNEMKQKELQRMQMNM) form a coiled coil. Residues Ser455 and Ser464 each carry the phosphoserine modification. Disordered regions lie at residues 480-534 (RDAK…DDEA) and 565-654 (NNVE…HSRD). Residues 505–517 (SLEKKEEEGKDYI) show a composition bias toward basic and acidic residues. A compositionally biased stretch (acidic residues) spans 518–534 (EDNDDEGVEGDSDDDEA). Position 529 is a phosphoserine (Ser529). Positions 574 to 585 (NTVNDGIMSSES) are enriched in polar residues. Residues 598-607 (HEEMHQKQDE) are compositionally biased toward basic and acidic residues. Composition is skewed to acidic residues over residues 608 to 621 (ADSS…DSDF) and 629 to 641 (ASEE…DSEE). Positions 642–654 (EKNQTKKEKHSRD) are enriched in basic and acidic residues.

This sequence belongs to the class I-like SAM-binding methyltransferase superfamily. RNA methyltransferase RlmE family. SPB1 subfamily. Component of the nucleolar and nucleoplasmic pre-60S ribosomal particle. Interacts with the snoRNA-associated proteins NOP1 and NOP58.

The protein resides in the nucleus. Its subcellular location is the nucleolus. It carries out the reaction guanosine(2922) in 27S pre-rRNA + S-adenosyl-L-methionine = 2'-O-methylguanosine(2922) in 27S pre-rRNA + S-adenosyl-L-homocysteine + H(+). In terms of biological role, required for proper assembly of pre-ribosomal particles during the biogenesis of the 60S ribosomal subunit. Specifically methylates the guanosine in position 2922 of the 25S rRNA at the stage of 27S pre-rRNA maturation. Also methylates the uridine in position 2921 in the absence of methylation of this residue guided by snoRNA snR52 at the stage of 35S pre-rRNA maturation. The protein is 27S pre-rRNA (guanosine(2922)-2'-O)-methyltransferase of Saccharomyces cerevisiae (strain ATCC 204508 / S288c) (Baker's yeast).